A 201-amino-acid polypeptide reads, in one-letter code: uncharacterized protein (201 aa).

The N-terminal stretch at 1-25 (MYRAGVTLLVVAVVSLGRWDVVTMA) is a signal peptide. Residues 26-170 (AAIGIGWYEP…AYFRRSNHRA (145 aa)) lie on the Extracellular side of the membrane. N-linked (GlcNAc...) asparagine; by host glycans are attached at residues asparagine 46, asparagine 49, asparagine 55, asparagine 84, asparagine 95, asparagine 113, asparagine 122, asparagine 137, and asparagine 144. The chain crosses the membrane as a helical span at residues 171–191 (FMIVILTQVVFVVFIINASFI). Topologically, residues 192-201 (WSWTFRRHKR) are cytoplasmic.

The protein belongs to the HHV-5 UL120 protein family.

The protein resides in the host membrane. This is an uncharacterized protein from Homo sapiens (Human).